The chain runs to 126 residues: Small ribosomal subunit protein uS13 (126 aa).

Positions 94 to 126 (RGLPVHGQRTSTNARTRKGPRRAIAGKKKPGKK) are disordered. Residues 108-126 (RTRKGPRRAIAGKKKPGKK) are compositionally biased toward basic residues.

The protein belongs to the universal ribosomal protein uS13 family. As to quaternary structure, part of the 30S ribosomal subunit. Forms a loose heterodimer with protein S19. Forms two bridges to the 50S subunit in the 70S ribosome.

In terms of biological role, located at the top of the head of the 30S subunit, it contacts several helices of the 16S rRNA. In the 70S ribosome it contacts the 23S rRNA (bridge B1a) and protein L5 of the 50S subunit (bridge B1b), connecting the 2 subunits; these bridges are implicated in subunit movement. Contacts the tRNAs in the A and P-sites. This chain is Small ribosomal subunit protein uS13, found in Streptomyces griseus subsp. griseus (strain JCM 4626 / CBS 651.72 / NBRC 13350 / KCC S-0626 / ISP 5235).